A 564-amino-acid chain; its full sequence is Septation ring formation regulator EzrA (564 aa).

Residues 1-4 (MVLY) are Extracellular-facing. Residues 5–23 (IILAIIVIILIAVGVLFYL) traverse the membrane as a helical segment. The Cytoplasmic portion of the chain corresponds to 24–564 (RSNKRQIIEK…KHIEEEVIKQ (541 aa)). Coiled-coil stretches lie at residues 99 to 138 (SFNASQSEIDDANELMDSYEQSYQQQLEDVNEIIALYKDN), 190 to 223 (DGNYVQAHNHIAALNEQMKQLRSYMEEIPELIRE), 271 to 300 (LISRLELEEANDKLANINDKLDDMYDLIEH), 350 to 435 (VRQF…RRLL), and 471 to 550 (VKQL…ESVE).

The protein belongs to the EzrA family.

The protein resides in the cell membrane. In terms of biological role, negative regulator of FtsZ ring formation; modulates the frequency and position of FtsZ ring formation. Inhibits FtsZ ring formation at polar sites. Interacts either with FtsZ or with one of its binding partners to promote depolymerization. The polypeptide is Septation ring formation regulator EzrA (Staphylococcus aureus (strain NCTC 8325 / PS 47)).